The primary structure comprises 367 residues: DNA replication and repair protein RecF (367 aa).

30 to 37 (GNNGEGKT) is an ATP binding site.

Belongs to the RecF family.

It localises to the cytoplasm. The RecF protein is involved in DNA metabolism; it is required for DNA replication and normal SOS inducibility. RecF binds preferentially to single-stranded, linear DNA. It also seems to bind ATP. The sequence is that of DNA replication and repair protein RecF from Leptospira biflexa serovar Patoc (strain Patoc 1 / Ames).